The primary structure comprises 140 residues: 5-NmdU N-acetyltransferase (140 aa).

One can recognise an N-acetyltransferase domain in the interval 2–140 (IVVRKALPEE…GEGLALFKEW (139 aa)).

This sequence belongs to the acetyltransferase family.

The catalysed reaction is 5-aminomethyl-dUMP in DNA + acetyl-CoA = 5-acetylaminomethyl-dUMP in DNA + CoA + H(+). Its function is as follows. Acetylates 5-aminomethyl-2'-deoxyuridine (5-NmdU) to produce 5-acetylaminomethyl-2'-deoxyuridine (5-AcNmdU) on DNA as a step in the pathway leading to thymidine hypermodifications in the viral genome. As a final result of the pathway of hypermodification, 5-acetylaminomethyl-2'-deoxyuridine (5-AcNmdU) substitutes for a subset of thymidines in the viral DNA. These modifications probably prevent degradation of viral genome by the host restriction-modification antiviral defense system. In Pseudomonas aeruginosa, this protein is 5-NmdU N-acetyltransferase.